The sequence spans 503 residues: Anaerobic nitric oxide reductase flavorubredoxin (503 aa).

Residues 30-210 are zinc metallo-hydrolase; that stretch reads LQGSSYNSYL…PFSRLVTAKI (181 aa). Fe cation is bound by residues histidine 79, glutamate 81, aspartate 83, histidine 147, aspartate 166, and histidine 227. Residues 254-393 enclose the Flavodoxin-like domain; that stretch reads ITLFYDTMSN…ICREHGREIA (140 aa). FMN-binding positions include 260–264 and 342–369; these read TMSNN and AFGS…ETTL. In terms of domain architecture, Rubredoxin-like spans 451–502; that stretch reads NGCMQCSVCQWIYDPALGEPMQDVTPGTMWSDVPDSFLCPECGLGKDVFNPI. Cysteine 456, cysteine 459, cysteine 489, and cysteine 492 together coordinate Fe cation.

The protein in the N-terminal section; belongs to the zinc metallo-hydrolase group 3 family. Homotetramer. Fe cation serves as cofactor. The cofactor is FMN.

It localises to the cytoplasm. The protein operates within nitrogen metabolism; nitric oxide reduction. In terms of biological role, anaerobic nitric oxide reductase; uses NADH to detoxify nitric oxide (NO), protecting several 4Fe-4S NO-sensitive enzymes. Has at least 2 reductase partners, only one of which (NorW, flavorubredoxin reductase) has been identified. NO probably binds to the di-iron center; electrons enter from the NorW at rubredoxin and are transferred sequentially to the FMN center and the di-iron center. Also able to function as an aerobic oxygen reductase. This is Anaerobic nitric oxide reductase flavorubredoxin from Pectobacterium carotovorum subsp. carotovorum (strain PC1).